The primary structure comprises 131 residues: Transcription antitermination protein NusB (131 aa).

Belongs to the NusB family.

In terms of biological role, involved in transcription antitermination. Required for transcription of ribosomal RNA (rRNA) genes. Binds specifically to the boxA antiterminator sequence of the ribosomal RNA (rrn) operons. This chain is Transcription antitermination protein NusB, found in Agathobacter rectalis (strain ATCC 33656 / DSM 3377 / JCM 17463 / KCTC 5835 / VPI 0990) (Eubacterium rectale).